The primary structure comprises 175 residues: ATP-dependent protease subunit HslV (175 aa).

Residue Thr-2 is part of the active site. Positions 156, 159, and 162 each coordinate Na(+).

It belongs to the peptidase T1B family. HslV subfamily. A double ring-shaped homohexamer of HslV is capped on each side by a ring-shaped HslU homohexamer. The assembly of the HslU/HslV complex is dependent on binding of ATP.

It is found in the cytoplasm. The catalysed reaction is ATP-dependent cleavage of peptide bonds with broad specificity.. With respect to regulation, allosterically activated by HslU binding. Protease subunit of a proteasome-like degradation complex believed to be a general protein degrading machinery. This Rhizobium etli (strain ATCC 51251 / DSM 11541 / JCM 21823 / NBRC 15573 / CFN 42) protein is ATP-dependent protease subunit HslV.